Reading from the N-terminus, the 245-residue chain is Thiamine phosphate phosphatase-like protein (245 aa).

The Nucleophile role is filled by aspartate 9. Aspartate 9, aspartate 11, and aspartate 179 together coordinate Mg(2+). Catalysis depends on aspartate 11, which acts as the Proton donor.

This sequence belongs to the HAD-like hydrolase superfamily. Monomer. Mg(2+) is required as a cofactor.

It catalyses the reaction thiamine phosphate + H2O = thiamine + phosphate. In terms of biological role, HAD-like hydrolase that has a thiamine monophosphate phosphatase activity in a heterologous system. Does not contribute to thiamine monophosphate phosphatase activity in planta. The sequence is that of Thiamine phosphate phosphatase-like protein from Arabidopsis thaliana (Mouse-ear cress).